The following is a 147-amino-acid chain: Large ribosomal subunit protein uL16 (147 aa).

It belongs to the universal ribosomal protein uL16 family. As to quaternary structure, part of the 50S ribosomal subunit.

Binds 23S rRNA and is also seen to make contacts with the A and possibly P site tRNAs. In Lactobacillus delbrueckii subsp. bulgaricus (strain ATCC 11842 / DSM 20081 / BCRC 10696 / JCM 1002 / NBRC 13953 / NCIMB 11778 / NCTC 12712 / WDCM 00102 / Lb 14), this protein is Large ribosomal subunit protein uL16.